Reading from the N-terminus, the 287-residue chain is Undecaprenyl-diphosphatase (287 aa).

7 helical membrane-spanning segments follow: residues 6–26 (LYLIKAFFLGIIEGLTEFIPV), 45–65 (SGKVFEVVIQFGSILAVMWIF), 85–105 (AFTRNLLLAFLPAAVVGAIFI), 111–131 (VFYHPGVVAVTLVLGGLIMLW), 204–224 (ATEFSFFLAMPTMLGAATYDL), 238–258 (AIAVGFAAAFISALVVVRAVL), and 265–285 (TYRGFAWYRIALGIVVAAWLM).

Belongs to the UppP family.

The protein resides in the cell inner membrane. The enzyme catalyses di-trans,octa-cis-undecaprenyl diphosphate + H2O = di-trans,octa-cis-undecaprenyl phosphate + phosphate + H(+). Functionally, catalyzes the dephosphorylation of undecaprenyl diphosphate (UPP). Confers resistance to bacitracin. This Bordetella petrii (strain ATCC BAA-461 / DSM 12804 / CCUG 43448) protein is Undecaprenyl-diphosphatase.